Reading from the N-terminus, the 131-residue chain is Small ribosomal subunit protein uS8 (131 aa).

The protein belongs to the universal ribosomal protein uS8 family. As to quaternary structure, part of the 30S ribosomal subunit. Contacts proteins S5 and S12.

Functionally, one of the primary rRNA binding proteins, it binds directly to 16S rRNA central domain where it helps coordinate assembly of the platform of the 30S subunit. The chain is Small ribosomal subunit protein uS8 from Azobacteroides pseudotrichonymphae genomovar. CFP2.